The primary structure comprises 868 residues: DNA topoisomerase 1 (868 aa).

Residues 3–148 (KSLVIVESPA…RFSRVVFNEI (146 aa)) enclose the Toprim domain. Residues Glu-9 and Asp-117 each contribute to the Mg(2+) site. One can recognise a Topo IA-type catalytic domain in the interval 164–581 (NMDRVNAQQT…QFFKDFSSQL (418 aa)). The interval 198-203 (SAGRVQ) is interaction with DNA. Catalysis depends on Tyr-325, which acts as the O-(5'-phospho-DNA)-tyrosine intermediate. 3 consecutive C4-type zinc fingers follow at residues 605-636 (CPTCGRNMAIRTASTGVFLGCTGYALPPKERC), 667-694 (CTKCGTAMDSYVIDAHRKIHICGNNPNC), and 716-739 (CDKCGADMHLKLGRFGKYMGCTNC).

It belongs to the type IA topoisomerase family. Monomer. Mg(2+) is required as a cofactor.

It catalyses the reaction ATP-independent breakage of single-stranded DNA, followed by passage and rejoining.. Its function is as follows. Releases the supercoiling and torsional tension of DNA, which is introduced during the DNA replication and transcription, by transiently cleaving and rejoining one strand of the DNA duplex. Introduces a single-strand break via transesterification at a target site in duplex DNA. The scissile phosphodiester is attacked by the catalytic tyrosine of the enzyme, resulting in the formation of a DNA-(5'-phosphotyrosyl)-enzyme intermediate and the expulsion of a 3'-OH DNA strand. The free DNA strand then undergoes passage around the unbroken strand, thus removing DNA supercoils. Finally, in the religation step, the DNA 3'-OH attacks the covalent intermediate to expel the active-site tyrosine and restore the DNA phosphodiester backbone. This is DNA topoisomerase 1 from Haemophilus influenzae (strain ATCC 51907 / DSM 11121 / KW20 / Rd).